The sequence spans 344 residues: Anthranilate phosphoribosyltransferase (344 aa).

5-phospho-alpha-D-ribose 1-diphosphate is bound by residues glycine 84, 87–88 (GD), threonine 92, 94–97 (NIST), 112–120 (KHGNRSVSS), and serine 124. Residue glycine 84 coordinates anthranilate. Residue serine 96 participates in Mg(2+) binding. Asparagine 115 is an anthranilate binding site. Residue arginine 170 coordinates anthranilate. Mg(2+)-binding residues include aspartate 229 and glutamate 230.

This sequence belongs to the anthranilate phosphoribosyltransferase family. Homodimer. Requires Mg(2+) as cofactor.

The enzyme catalyses N-(5-phospho-beta-D-ribosyl)anthranilate + diphosphate = 5-phospho-alpha-D-ribose 1-diphosphate + anthranilate. Its pathway is amino-acid biosynthesis; L-tryptophan biosynthesis; L-tryptophan from chorismate: step 2/5. Functionally, catalyzes the transfer of the phosphoribosyl group of 5-phosphorylribose-1-pyrophosphate (PRPP) to anthranilate to yield N-(5'-phosphoribosyl)-anthranilate (PRA). This is Anthranilate phosphoribosyltransferase from Xylella fastidiosa (strain M23).